We begin with the raw amino-acid sequence, 262 residues long: Indole-3-glycerol phosphate synthase (262 aa).

It belongs to the TrpC family.

The catalysed reaction is 1-(2-carboxyphenylamino)-1-deoxy-D-ribulose 5-phosphate + H(+) = (1S,2R)-1-C-(indol-3-yl)glycerol 3-phosphate + CO2 + H2O. It functions in the pathway amino-acid biosynthesis; L-tryptophan biosynthesis; L-tryptophan from chorismate: step 4/5. The sequence is that of Indole-3-glycerol phosphate synthase from Thiobacillus denitrificans (strain ATCC 25259 / T1).